The following is a 101-amino-acid chain: uncharacterized protein (101 aa).

Residues 13-33 (FISIMCLFSIPLCFSLSIFFF) form a helical membrane-spanning segment.

Its subcellular location is the membrane. This is an uncharacterized protein from Schizosaccharomyces pombe (strain 972 / ATCC 24843) (Fission yeast).